The chain runs to 316 residues: Protease HtpX homolog (316 aa).

The chain crosses the membrane as a helical span at residues leucine 16–valine 36. Histidine 130 serves as a coordination point for Zn(2+). Glutamate 131 is an active-site residue. Histidine 134 provides a ligand contact to Zn(2+). The next 2 membrane-spanning stretches (helical) occupy residues methionine 145–alanine 165 and leucine 174–isoleucine 194. Glutamate 199 serves as a coordination point for Zn(2+). Residues proline 285–glycine 316 form a disordered region.

It belongs to the peptidase M48B family. Requires Zn(2+) as cofactor.

It is found in the cell inner membrane. The sequence is that of Protease HtpX homolog from Rhizorhabdus wittichii (strain DSM 6014 / CCUG 31198 / JCM 15750 / NBRC 105917 / EY 4224 / RW1) (Sphingomonas wittichii).